The chain runs to 233 residues: uncharacterized protein (233 aa).

A disordered region spans residues 21-43 (RWRTATSADHPRRGRPAAQAVRR).

This is an uncharacterized protein from Mycobacterium tuberculosis (strain CDC 1551 / Oshkosh).